The following is a 336-amino-acid chain: UPF0324 membrane protein BT_1919 (336 aa).

The next 8 membrane-spanning stretches (helical) occupy residues 2–19 (LHGV…FYIG), 23–45 (FVRS…YANS), 85–107 (IGLP…GIYL), 117–134 (IALL…AAIL), 147–169 (TAVS…PFLY), 210–232 (AIIV…TYLV), 253–275 (WFAI…AQLV), and 310–332 (FVLA…KYLT).

The protein belongs to the UPF0324 family.

The protein resides in the cell membrane. The sequence is that of UPF0324 membrane protein BT_1919 from Bacteroides thetaiotaomicron (strain ATCC 29148 / DSM 2079 / JCM 5827 / CCUG 10774 / NCTC 10582 / VPI-5482 / E50).